The chain runs to 524 residues: Keratin, type II cytoskeletal 71 (524 aa).

Residues 1–130 form a head region; that stretch reads MNRQFTCKSG…DPEIQKVRAQ (130 aa). The tract at residues 131–166 is coil 1A; that stretch reads EREQIKALNNKFASFIDKVRFLEQQNQVLETKWELL. One can recognise an IF rod domain in the interval 131 to 444; it reads EREQIKALNN…KLLESEECRM (314 aa). The tract at residues 167-185 is linker 1; sequence QQLDLNNCKNNLEPILEGY. The coil 1B stretch occupies residues 186–277; the sequence is ISNLRKQLET…CLYEAEIAQI (92 aa). The tract at residues 278–301 is linker 12; the sequence is QSHISDMSVILSMDNNRDLNLDSI. Residues 302–440 are coil 2; that stretch reads IDEVRAQYEE…ATYRKLLESE (139 aa). Positions 441 to 524 are tail; it reads ECRMSGEFPS…QSASSKKASR (84 aa). The interval 491 to 524 is disordered; the sequence is VRGGEGRSRGSTSDYKDTLGKGSSQSASSKKASR. A compositionally biased stretch (basic and acidic residues) spans 494–509; the sequence is GEGRSRGSTSDYKDTL. Residues 510–524 show a composition bias toward low complexity; the sequence is GKGSSQSASSKKASR.

The protein belongs to the intermediate filament family. In terms of assembly, heterodimer of a type I and a type II keratin. Associates with KRT16 and/or KRT17.

The protein localises to the cytoplasm. It is found in the cytoskeleton. In terms of biological role, plays a central role in hair formation. Essential component of keratin intermediate filaments in the inner root sheath (IRS) of the hair follicle. The polypeptide is Keratin, type II cytoskeletal 71 (KRT71) (Felis catus (Cat)).